Reading from the N-terminus, the 433-residue chain is MQVTVETTEGLERHLTITVPAANIENAVTAELKKIAKNRRFDGFRPGKAPMKMVARMFGGSVRQDILGEVMQRHFIEAIVKEKINPAGAPTFTPVDIAEGKDLVFKASFEVFPEIVLAGLDQIAVEKPAVEVKDEDVTNMLDTLRKQQATWSDVDAAAEADSRVTIDFIGSIDGEEFEGGKAEGFALAMGQNRMIPGFEDSIVGKKAGEEFTLEVTFPEEYHAENLKGKAASFAITLHKVEAQELPELTEEFIAKFGVLDGSIEGLKTEVRKNMERELKQAVKGRIKEQVLDGLVEQNDINVPAALIDQEINVLRQQAAQRFGGDAKNTPELPRELFEEQAKRRVVVGLLIGEVIKTEELKADEDRVKAIITEMASAYEDPTEVVSYYEQNEKMMSNMRNVALEEQAIDALLAKAQVTEKEVGFNDLMNQPAA.

The 86-residue stretch at 161–246 (DSRVTIDFIG…LHKVEAQELP (86 aa)) folds into the PPIase FKBP-type domain.

This sequence belongs to the FKBP-type PPIase family. Tig subfamily.

The protein localises to the cytoplasm. The enzyme catalyses [protein]-peptidylproline (omega=180) = [protein]-peptidylproline (omega=0). Functionally, involved in protein export. Acts as a chaperone by maintaining the newly synthesized protein in an open conformation. Functions as a peptidyl-prolyl cis-trans isomerase. The polypeptide is Trigger factor (Photobacterium profundum (strain SS9)).